Consider the following 380-residue polypeptide: Acyl-lipid (9+3)-(E)-desaturase (380 aa).

The disordered stretch occupies residues 1 to 25; that stretch reads MGAGGCISVSETKPNQKNSLERAPY. Polar residues predominate over residues 9–18; it reads VSETKPNQKN. Transmembrane regions (helical) follow at residues 52-72 and 81-101; these read LSYV…TTYF and ALAW…VWVI. The Histidine box-1 motif lies at 103–107; it reads HECGH. Residues 139–143 carry the Histidine box-2 motif; that stretch reads HRRHH. 3 consecutive transmembrane segments (helical) span residues 177–197, 223–243, and 247–267; these read IGVL…FNVS, IYLS…AAMV, and VWLI…LVLV. Residues 313-317 carry the Histidine box-3 motif; that stretch reads HIVHH.

It belongs to the fatty acid desaturase type 1 family.

The protein localises to the membrane. It carries out the reaction a (9Z)-octadecenoyl-containing glycerolipid + 2 Fe(II)-[cytochrome b5] + O2 + 2 H(+) = a (9Z,12E)-octadecadienoyl-containing glycerolipid + 2 Fe(III)-[cytochrome b5] + 2 H2O. The catalysed reaction is a (9Z)-hexadecenoyl-containing glycerolipid + 2 Fe(II)-[cytochrome b5] + O2 + 2 H(+) = a (9Z,12E)-hexadecadienoyl-containing glycerolipid + 2 Fe(III)-[cytochrome b5] + 2 H2O. Involved in the biosynthesis of dimorphecolic acid (9-OH-18:2(10E,12E)). Converts oleic acid (18:1(9Z)) into 18:2(9Z,12E) and probably palmitoleic acid (16:1(9Z)) into 16:2(9Z,12E). Very limited ability to catalyze (Z)-delta(12) desaturation. The sequence is that of Acyl-lipid (9+3)-(E)-desaturase from Dimorphotheca sinuata (African daisy).